Reading from the N-terminus, the 754-residue chain is Ribosomal RNA large subunit methyltransferase K/L (754 aa).

The 112-residue stretch at 46-157 (TAYRLCLWSR…RGEAILSLDL (112 aa)) folds into the THUMP domain.

The protein belongs to the methyltransferase superfamily. RlmKL family.

It localises to the cytoplasm. It catalyses the reaction guanosine(2445) in 23S rRNA + S-adenosyl-L-methionine = N(2)-methylguanosine(2445) in 23S rRNA + S-adenosyl-L-homocysteine + H(+). The catalysed reaction is guanosine(2069) in 23S rRNA + S-adenosyl-L-methionine = N(2)-methylguanosine(2069) in 23S rRNA + S-adenosyl-L-homocysteine + H(+). Specifically methylates the guanine in position 2445 (m2G2445) and the guanine in position 2069 (m7G2069) of 23S rRNA. The sequence is that of Ribosomal RNA large subunit methyltransferase K/L from Pseudomonas fluorescens (strain ATCC BAA-477 / NRRL B-23932 / Pf-5).